The following is a 1230-amino-acid chain: Serine/threonine-protein kinase CST20 (1230 aa).

A compositionally biased stretch (polar residues) spans 1-20 (MSILSENNPTPTSITDPNKS). 2 disordered regions span residues 1–384 (MSIL…TAHN) and 413–470 (SSLE…HSQE). Low complexity-rich tracts occupy residues 57 to 70 (NTTS…SLGS) and 96 to 125 (SGSG…NPES). Over residues 150–161 (HQGDDSDNEKQY) the composition is skewed to basic and acidic residues. 3 stretches are compositionally biased toward polar residues: residues 175 to 197 (DSYS…NNVS), 207 to 224 (TSSL…NENA), and 237 to 246 (PTSKTSSFHD). Low complexity predominate over residues 248 to 257 (SSVISSSTSV). Polar residues-rich tracts occupy residues 262–277 (SNPT…SYKS) and 311–330 (DTLS…TLQG). 2 stretches are compositionally biased toward low complexity: residues 349-381 (NTSA…STST) and 439-468 (KVRG…NSHS). A CRIB domain is found at 475–488 (ISTPFNAKHLAHVG). 2 disordered regions span residues 545–831 (FHFD…ALAD) and 867–919 (LREK…KQAA). A compositionally biased stretch (polar residues) spans 550–561 (NKSSSSGWSNEN). A compositionally biased stretch (gly residues) spans 570-581 (SNSGSGSGGGGA). The span at 604–613 (ITPSQSMPTK) shows a compositional bias: polar residues. Residues 614-628 (TESKQSENQHPHEDN) are compositionally biased toward basic and acidic residues. A compositionally biased stretch (polar residues) spans 629–642 (ATQYTPRTPTSHVQ). Composition is skewed to low complexity over residues 670–683 (PSSQ…SQSD), 696–710 (SPSK…SKSL), and 736–749 (SIPK…SLSS). A compositionally biased stretch (polar residues) spans 750 to 761 (QLRPATNGSTTA). Over residues 789 to 807 (APPPPPSAPPAPPVPPAPP) the composition is skewed to pro residues. Over residues 811-826 (LSEQTSEIPQQRTAPS) the composition is skewed to polar residues. Basic and acidic residues predominate over residues 867 to 876 (LREKNERQNR). Positions 877–892 (QQETGQNNADTASGGS) are enriched in polar residues. One can recognise a Protein kinase domain in the interval 953-1205 (YVDLVKIGQG…ADELLHDNFI (253 aa)). Residues 959-967 (IGQGASGGV) and Lys983 contribute to the ATP site. The active-site Proton acceptor is Asp1073.

Belongs to the protein kinase superfamily. STE Ser/Thr protein kinase family. STE20 subfamily.

The protein localises to the cytoplasm. It localises to the nucleus. The enzyme catalyses L-seryl-[protein] + ATP = O-phospho-L-seryl-[protein] + ADP + H(+). The catalysed reaction is L-threonyl-[protein] + ATP = O-phospho-L-threonyl-[protein] + ADP + H(+). Its function is as follows. MAP4K component of the MAPK pathway required for the mating pheromone response, and the regulation of cell polarity and cell cycle. Phosphorylates histone H2B to form H2BS10ph. Required for hyphal formation and virulence. The chain is Serine/threonine-protein kinase CST20 (CST20) from Candida albicans (Yeast).